We begin with the raw amino-acid sequence, 245 residues long: Type II restriction enzyme MjaIV (245 aa).

The enzyme catalyses Endonucleolytic cleavage of DNA to give specific double-stranded fragments with terminal 5'-phosphates.. Functionally, a P subtype restriction enzyme that recognizes the double-stranded sequence 5'-GTNNAC-3'; the cleavage site is unknown. The sequence is that of Type II restriction enzyme MjaIV (mjaIVR) from Methanocaldococcus jannaschii (strain ATCC 43067 / DSM 2661 / JAL-1 / JCM 10045 / NBRC 100440) (Methanococcus jannaschii).